We begin with the raw amino-acid sequence, 555 residues long: Chaperonin GroEL (555 aa).

ATP-binding positions include T29–P32, K50, D86–T90, G418, and D499. Residues H528–F555 form a disordered region. Gly residues predominate over residues R537–F555.

It belongs to the chaperonin (HSP60) family. As to quaternary structure, forms a cylinder of 14 subunits composed of two heptameric rings stacked back-to-back. Interacts with the co-chaperonin GroES.

It is found in the cytoplasm. The enzyme catalyses ATP + H2O + a folded polypeptide = ADP + phosphate + an unfolded polypeptide.. In terms of biological role, together with its co-chaperonin GroES, plays an essential role in assisting protein folding. The GroEL-GroES system forms a nano-cage that allows encapsulation of the non-native substrate proteins and provides a physical environment optimized to promote and accelerate protein folding. This chain is Chaperonin GroEL, found in Orientia tsutsugamushi (strain Ikeda) (Rickettsia tsutsugamushi).